Reading from the N-terminus, the 489-residue chain is Rhamnulokinase (489 aa).

13–17 (ASSGR) is a binding site for ATP. An intrachain disulfide couples Cys68 to Cys222. Residues Gly83 and 236 to 238 (HDT) contribute to the substrate site. The active-site Proton acceptor is the Asp237. Position 259 (Thr259) interacts with ATP. Asn296 contributes to the substrate binding site. Position 304 (Gln304) interacts with ATP. The cysteines at positions 353 and 370 are disulfide-linked. Gly402 lines the ATP pocket. Cys413 and Cys417 form a disulfide bridge.

It belongs to the rhamnulokinase family. The cofactor is Mg(2+).

The catalysed reaction is L-rhamnulose + ATP = L-rhamnulose 1-phosphate + ADP + H(+). It functions in the pathway carbohydrate degradation; L-rhamnose degradation; glycerone phosphate from L-rhamnose: step 2/3. Involved in the catabolism of L-rhamnose (6-deoxy-L-mannose). Catalyzes the transfer of the gamma-phosphate group from ATP to the 1-hydroxyl group of L-rhamnulose to yield L-rhamnulose 1-phosphate. This Salmonella paratyphi B (strain ATCC BAA-1250 / SPB7) protein is Rhamnulokinase.